The following is a 432-amino-acid chain: Transcriptional adapter 3 (432 aa).

Residue K21 forms a Glycyl lysine isopeptide (Lys-Gly) (interchain with G-Cter in SUMO2) linkage. The stretch at 40–69 (IEELDTLQLELETLLSSASRRLRVLEAETQ) forms a coiled coil. Residues 87–127 (GRDHELGAPPKHGKPKKQKLEGKTGHGPGPGPGRPKSKNVQ) form a disordered region. A Glycyl lysine isopeptide (Lys-Gly) (interchain with G-Cter in SUMO2) cross-link involves residue K129. Residues 272–319 (NIISPMEDSPIPDMSGKESGADGASTSPRNQNKPFSVPHTKSLESRIK) form a disordered region. 2 positions are modified to phosphoserine: S280 and S298. A compositionally biased stretch (polar residues) spans 295-305 (ASTSPRNQNKP). Residues 367-407 (LLRLAKEEVSRQELRQRVRMADNEVMDAFRKIMAARQKKRT) adopt a coiled-coil conformation. An N6-acetyllysine modification is found at K418.

This sequence belongs to the NGG1 family. The PCAF complex is composed of a number of TBP-associated factors (TAFS), such as TAF5, TAF5L, TAF6, TAF6L, TAF9, TAF10 and TAF12, PCAF, and also PCAF-associated factors (PAFs), such as TADA2L/ADA2, TADA3L/ADA3 and SPT3. Interacts directly with TADA2L and PCAF and also with the high-risk HPV oncoprotein E6. Component of the STAGA transcription coactivator-HAT complex, at least composed of SUPT3H, GCN5L2, TAF5L, TAF6L, SUPT7L, TADA3L, TAD1L, TAF10, TAF12, TRRAP and TAF9. Component of the TFTC-HAT complex. Component of the ADA2A-containing complex (ATAC), composed of KAT14, KAT2A, TADA2L, TADA3L, ZZ3, MBIP, WDR5, YEATS2, CCDC101 and DR1.

The protein resides in the nucleus. In terms of biological role, functions as a component of the PCAF complex. The PCAF complex is capable of efficiently acetylating histones in a nucleosomal context. The PCAF complex could be considered as the human version of the yeast SAGA complex. Also known as a coactivator for p53/TP53-dependent transcriptional activation. Component of the ATAC complex, a complex with histone acetyltransferase activity on histones H3 and H4. The polypeptide is Transcriptional adapter 3 (Tada3) (Mus musculus (Mouse)).